The primary structure comprises 351 residues: Dihydroorotate dehydrogenase (quinone) (351 aa).

FMN-binding positions include 61–65 and Thr85; that span reads AGLDK. Substrate is bound at residue Lys65. 110–114 provides a ligand contact to substrate; it reads NRMGF. Asn139 and Asn172 together coordinate FMN. Substrate is bound at residue Asn172. The Nucleophile role is filled by Ser175. Asn177 provides a ligand contact to substrate. 2 residues coordinate FMN: Lys217 and Thr245. Position 246-247 (246-247) interacts with substrate; it reads NT. FMN-binding positions include Gly268, Gly297, and 318–319; that span reads YS.

This sequence belongs to the dihydroorotate dehydrogenase family. Type 2 subfamily. Monomer. Requires FMN as cofactor.

It localises to the cell membrane. The catalysed reaction is (S)-dihydroorotate + a quinone = orotate + a quinol. It participates in pyrimidine metabolism; UMP biosynthesis via de novo pathway; orotate from (S)-dihydroorotate (quinone route): step 1/1. In terms of biological role, catalyzes the conversion of dihydroorotate to orotate with quinone as electron acceptor. The polypeptide is Dihydroorotate dehydrogenase (quinone) (Stenotrophomonas maltophilia (strain R551-3)).